The following is a 152-amino-acid chain: Mitochondrial fission 1 protein (152 aa).

M1 is modified (N-acetylmethionine). At M1–G122 the chain is on the cytoplasmic side. S10 bears the Phosphoserine mark. The TPR repeat unit spans residues R71–N104. A helical membrane pass occupies residues L123–I143. Over G144–S152 the chain is Mitochondrial intermembrane.

Belongs to the FIS1 family. As to quaternary structure, interacts with DNM1L/DLP1 through the TPR region; may form part of a larger protein complex at the endoplasmic reticulum-mitochondrial interface during mitochondrial fission. Interacts with MARCHF5. Interacts with MIEF1. Interacts with PEX11A, PEX11B and PEX11G. Post-translationally, ubiquitinated by MARCHF5.

The protein localises to the mitochondrion outer membrane. It localises to the peroxisome membrane. Its function is as follows. Involved in the fragmentation of the mitochondrial network and its perinuclear clustering. Plays a minor role in the recruitment and association of the fission mediator dynamin-related protein 1 (DNM1L) to the mitochondrial surface and mitochondrial fission. May not be essential for the assembly of functional fission complexes and the subsequent membrane scission event. Also mediates peroxisomal fission. May act when the products of fission are directed toward mitochondrial homeostasis, mitophagy, or apoptosis. Can induce cytochrome c release from the mitochondrion to the cytosol, ultimately leading to apoptosis. This chain is Mitochondrial fission 1 protein (Fis1), found in Mus musculus (Mouse).